Reading from the N-terminus, the 95-residue chain is Fluoride-specific ion channel FluC 1 (95 aa).

A run of 3 helical transmembrane segments spans residues 23 to 43 (LIDAPLALLGINLLGSFLMGW), 49 to 69 (LWGTGFLGGFTSFSAFALLMF), and 70 to 90 (DGAYLYAAVTVIGCVAAWLLG). 2 residues coordinate Na(+): G56 and T59.

Belongs to the fluoride channel Fluc/FEX (TC 1.A.43) family.

Its subcellular location is the cell membrane. It catalyses the reaction fluoride(in) = fluoride(out). Na(+) is not transported, but it plays an essential structural role and its presence is essential for fluoride channel function. In terms of biological role, fluoride-specific ion channel. Important for reducing fluoride concentration in the cell, thus reducing its toxicity. The chain is Fluoride-specific ion channel FluC 1 from Corynebacterium diphtheriae (strain ATCC 700971 / NCTC 13129 / Biotype gravis).